The sequence spans 937 residues: Translation initiation factor IF-2 (937 aa).

Disordered regions lie at residues 157–230 and 250–346; these read KEAQ…AARK and IKAP…ESNF. Basic and acidic residues predominate over residues 173–205; the sequence is EAQKADAAKPVEAKADESAQEEKKRVAAEESKK. Residues 252–265 show a composition bias toward low complexity; that stretch reads APEPAAPVAAKPAE. Residues 267 to 293 show a composition bias toward basic and acidic residues; the sequence is TLHKPADKKAGEKKDEKKPAVTADKKS. A compositionally biased stretch (polar residues) spans 295 to 304; the sequence is KSANVSSTWQ. Positions 437 to 606 constitute a tr-type G domain; sequence PRAPVVTVMG…LLQAEVLELK (170 aa). Residues 446–453 form a G1 region; it reads GHVDHGKT. A GTP-binding site is contributed by 446 to 453; the sequence is GHVDHGKT. The segment at 471–475 is G2; that stretch reads GITQH. Residues 492-495 are G3; sequence DTPG. GTP contacts are provided by residues 492-496 and 546-549; these read DTPGH and NKID. The tract at residues 546–549 is G4; it reads NKID. The segment at 582-584 is G5; the sequence is SAK.

This sequence belongs to the TRAFAC class translation factor GTPase superfamily. Classic translation factor GTPase family. IF-2 subfamily.

It is found in the cytoplasm. Functionally, one of the essential components for the initiation of protein synthesis. Protects formylmethionyl-tRNA from spontaneous hydrolysis and promotes its binding to the 30S ribosomal subunits. Also involved in the hydrolysis of GTP during the formation of the 70S ribosomal complex. The chain is Translation initiation factor IF-2 from Janthinobacterium sp. (strain Marseille) (Minibacterium massiliensis).